The following is a 409-amino-acid chain: Endoglucanase B (409 aa).

The signal sequence occupies residues 1–21 (MKLKRIAALLTAAVMSVGVMA). The interval 23–66 (CGGSKSDDKSKADTKSAAETSGAEGDSSESEEIPVSQTHTNDPM) is disordered. Over residues 27-38 (KSDDKSKADTKS) the composition is skewed to basic and acidic residues. The segment covering 57 to 66 (VSQTHTNDPM) has biased composition (polar residues). The active-site Proton donor is E212. Residue E332 is the Nucleophile of the active site.

Belongs to the glycosyl hydrolase 5 (cellulase A) family.

It carries out the reaction Endohydrolysis of (1-&gt;4)-beta-D-glucosidic linkages in cellulose, lichenin and cereal beta-D-glucans.. This chain is Endoglucanase B (celB), found in Ruminococcus albus.